The following is an 89-amino-acid chain: Large ribosomal subunit protein bL27 (89 aa).

The interval methionine 1–leucine 21 is disordered.

This sequence belongs to the bacterial ribosomal protein bL27 family.

The polypeptide is Large ribosomal subunit protein bL27 (Bartonella quintana (strain Toulouse) (Rochalimaea quintana)).